We begin with the raw amino-acid sequence, 671 residues long: E3 ubiquitin-protein ligase pub2 (671 aa).

The C2 domain occupies 1-112; sequence MENIRFEVQL…KDDYKTRITL (112 aa). The WW domain occupies 242–275; sequence GPLPAGWEMRLSEDYHVYFVDHSTKTTTWSDPRD. In terms of domain architecture, HECT spans 338 to 671; that stretch reads SVSDMKKKLL…IQETAGFGTE (334 aa). The Glycyl thioester intermediate role is filled by C639.

Interacts with the E2 ubiquitin-conjugating enzyme ubc4.

It localises to the membrane. The protein resides in the cytoplasm. It carries out the reaction S-ubiquitinyl-[E2 ubiquitin-conjugating enzyme]-L-cysteine + [acceptor protein]-L-lysine = [E2 ubiquitin-conjugating enzyme]-L-cysteine + N(6)-ubiquitinyl-[acceptor protein]-L-lysine.. It functions in the pathway protein modification; protein ubiquitination. Functionally, E3 ubiquitin-protein ligase which accepts ubiquitin from an E2 ubiquitin-conjugating enzyme in the form of a thioester and then directly transfers the ubiquitin to targeted substrates. The chain is E3 ubiquitin-protein ligase pub2 (pub2) from Schizosaccharomyces pombe (strain 972 / ATCC 24843) (Fission yeast).